The chain runs to 147 residues: Large ribosomal subunit protein bL9 (147 aa).

The protein belongs to the bacterial ribosomal protein bL9 family.

Its function is as follows. Binds to the 23S rRNA. This is Large ribosomal subunit protein bL9 from Campylobacter fetus subsp. fetus (strain 82-40).